Consider the following 304-residue polypeptide: 4-diphosphocytidyl-2-C-methyl-D-erythritol kinase (304 aa).

Lys18 is a catalytic residue. Position 103-113 (103-113) interacts with ATP; that stretch reads PVAAGIGGGSA. Residue Asp145 is part of the active site.

Belongs to the GHMP kinase family. IspE subfamily.

The catalysed reaction is 4-CDP-2-C-methyl-D-erythritol + ATP = 4-CDP-2-C-methyl-D-erythritol 2-phosphate + ADP + H(+). It functions in the pathway isoprenoid biosynthesis; isopentenyl diphosphate biosynthesis via DXP pathway; isopentenyl diphosphate from 1-deoxy-D-xylulose 5-phosphate: step 3/6. Functionally, catalyzes the phosphorylation of the position 2 hydroxy group of 4-diphosphocytidyl-2C-methyl-D-erythritol. The chain is 4-diphosphocytidyl-2-C-methyl-D-erythritol kinase from Rhodospirillum rubrum (strain ATCC 11170 / ATH 1.1.1 / DSM 467 / LMG 4362 / NCIMB 8255 / S1).